The primary structure comprises 402 residues: Rubredoxin-oxygen oxidoreductase (402 aa).

A zinc metallo-hydrolase region spans residues 30–216; that stretch reads PMGTTYNAYL…KAIETLVGAG (187 aa). Fe cation is bound by residues H79, E81, D83, H146, D165, and H226. One can recognise a Flavodoxin-like domain in the interval 255–393; that stretch reads VVIFYDSMWH…QLKTMAQTIA (139 aa).

In the N-terminal section; belongs to the zinc metallo-hydrolase group 3 family. As to quaternary structure, homodimer. FMN serves as cofactor. It depends on Fe cation as a cofactor.

Its pathway is energy metabolism; electron transfer. Functionally, catalyzes the four-electron reduction of one oxygen molecule to two water molecules. The chain is Rubredoxin-oxygen oxidoreductase (roo) from Megalodesulfovibrio gigas (strain ATCC 19364 / DSM 1382 / NCIMB 9332 / VKM B-1759) (Desulfovibrio gigas).